The following is a 169-amino-acid chain: ATP-dependent Clp protease adapter protein CLPS2, chloroplastic (169 aa).

Residues methionine 1–phenylalanine 33 constitute a chloroplast transit peptide. Residues aspartate 67–tyrosine 92 form a disordered region.

This sequence belongs to the ClpS family.

The protein localises to the plastid. It is found in the chloroplast stroma. Functionally, small adapter protein that modulate the activity of plastid Clp protease system (CLPC). Probably involved in substrate selection for plastid CLPC. The sequence is that of ATP-dependent Clp protease adapter protein CLPS2, chloroplastic from Chlamydomonas reinhardtii (Chlamydomonas smithii).